Consider the following 296-residue polypeptide: Cytidine deaminase (296 aa).

CMP/dCMP-type deaminase domains follow at residues 47 to 167 and 186 to 296; these read TEAE…FGPK and DSSD…VDPV. 88–90 lines the substrate pocket; sequence NLE. A Zn(2+)-binding site is contributed by His-101. Residue Glu-103 is the Proton donor of the active site. Zn(2+)-binding residues include Cys-128 and Cys-131.

It belongs to the cytidine and deoxycytidylate deaminase family. In terms of assembly, homodimer. Zn(2+) is required as a cofactor.

The catalysed reaction is cytidine + H2O + H(+) = uridine + NH4(+). It carries out the reaction 2'-deoxycytidine + H2O + H(+) = 2'-deoxyuridine + NH4(+). Functionally, this enzyme scavenges exogenous and endogenous cytidine and 2'-deoxycytidine for UMP synthesis. The protein is Cytidine deaminase of Shewanella sp. (strain ANA-3).